A 367-amino-acid polypeptide reads, in one-letter code: Queuine tRNA-ribosyltransferase (367 aa).

D89 acts as the Proton acceptor in catalysis. Residues 89–93 (DSGGF), D143, Q187, and G214 each bind substrate. The segment at 245–251 (GVGTPAD) is RNA binding. Residue D264 is the Nucleophile of the active site. The tract at residues 269-273 (TRNAR) is RNA binding; important for wobble base 34 recognition. Zn(2+)-binding residues include C302, C304, C307, and H333.

The protein belongs to the queuine tRNA-ribosyltransferase family. Homodimer. Within each dimer, one monomer is responsible for RNA recognition and catalysis, while the other monomer binds to the replacement base PreQ1. The cofactor is Zn(2+).

It catalyses the reaction 7-aminomethyl-7-carbaguanine + guanosine(34) in tRNA = 7-aminomethyl-7-carbaguanosine(34) in tRNA + guanine. It functions in the pathway tRNA modification; tRNA-queuosine biosynthesis. Its function is as follows. Catalyzes the base-exchange of a guanine (G) residue with the queuine precursor 7-aminomethyl-7-deazaguanine (PreQ1) at position 34 (anticodon wobble position) in tRNAs with GU(N) anticodons (tRNA-Asp, -Asn, -His and -Tyr). Catalysis occurs through a double-displacement mechanism. The nucleophile active site attacks the C1' of nucleotide 34 to detach the guanine base from the RNA, forming a covalent enzyme-RNA intermediate. The proton acceptor active site deprotonates the incoming PreQ1, allowing a nucleophilic attack on the C1' of the ribose to form the product. After dissociation, two additional enzymatic reactions on the tRNA convert PreQ1 to queuine (Q), resulting in the hypermodified nucleoside queuosine (7-(((4,5-cis-dihydroxy-2-cyclopenten-1-yl)amino)methyl)-7-deazaguanosine). In Nitrosospira multiformis (strain ATCC 25196 / NCIMB 11849 / C 71), this protein is Queuine tRNA-ribosyltransferase.